We begin with the raw amino-acid sequence, 309 residues long: tRNA N6-adenosine threonylcarbamoyltransferase (309 aa).

The Fe cation site is built by histidine 108 and histidine 112. Residues 130–134, aspartate 163, glycine 176, aspartate 180, and asparagine 269 contribute to the substrate site; that span reads LVSGG. Position 293 (aspartate 293) interacts with Fe cation.

Belongs to the KAE1 / TsaD family. The cofactor is Fe(2+).

Its subcellular location is the cytoplasm. It catalyses the reaction L-threonylcarbamoyladenylate + adenosine(37) in tRNA = N(6)-L-threonylcarbamoyladenosine(37) in tRNA + AMP + H(+). In terms of biological role, required for the formation of a threonylcarbamoyl group on adenosine at position 37 (t(6)A37) in tRNAs that read codons beginning with adenine. Is involved in the transfer of the threonylcarbamoyl moiety of threonylcarbamoyl-AMP (TC-AMP) to the N6 group of A37, together with TsaE and TsaB. TsaD likely plays a direct catalytic role in this reaction. The sequence is that of tRNA N6-adenosine threonylcarbamoyltransferase from Mycoplasmopsis agalactiae (strain NCTC 10123 / CIP 59.7 / PG2) (Mycoplasma agalactiae).